Consider the following 148-residue polypeptide: Deoxyuridine 5'-triphosphate nucleotidohydrolase (148 aa).

Substrate contacts are provided by residues 67-69, Asn-80, 84-86, and Met-94; these read RSG and LID.

The protein belongs to the dUTPase family. Mg(2+) serves as cofactor.

The catalysed reaction is dUTP + H2O = dUMP + diphosphate + H(+). The protein operates within pyrimidine metabolism; dUMP biosynthesis; dUMP from dCTP (dUTP route): step 2/2. In terms of biological role, this enzyme is involved in nucleotide metabolism: it produces dUMP, the immediate precursor of thymidine nucleotides and it decreases the intracellular concentration of dUTP so that uracil cannot be incorporated into DNA. This is Deoxyuridine 5'-triphosphate nucleotidohydrolase from Ralstonia nicotianae (strain ATCC BAA-1114 / GMI1000) (Ralstonia solanacearum).